The primary structure comprises 532 residues: Probable G-protein coupled receptor Mth-like 11 (532 aa).

Positions 1–20 (MGMFRVEYLLLGILVIGVRS) are cleaved as a signal peptide. The Extracellular portion of the chain corresponds to 21–229 (RDIPNCDFFD…VRKSRLSNAS (209 aa)). Intrachain disulfides connect Cys-26/Cys-80, Cys-82/Cys-87, Cys-91/Cys-184, Cys-92/Cys-103, and Cys-145/Cys-204. Asn-42 carries N-linked (GlcNAc...) asparagine glycosylation. Residues Asn-110, Asn-123, Asn-166, Asn-195, and Asn-227 are each glycosylated (N-linked (GlcNAc...) asparagine). Residues 230-250 (IPVKFSSVFFMVITIAAYLWL) form a helical membrane-spanning segment. The Cytoplasmic segment spans residues 251–262 (PKFRSLHGKCCN). A helical transmembrane segment spans residues 263-283 (LYFICLAITFLLNVISLFGIF). Residues 284 to 290 (ELKTPIC) are Extracellular-facing. Residues 291–311 (YLTGYAGYFTVMATFLWLSVI) traverse the membrane as a helical segment. Residues 312-339 (SFDVWRRFAMRKFQVFYKNKRSSFFNYN) lie on the Cytoplasmic side of the membrane. A helical transmembrane segment spans residues 340–360 (IIVWSSAGLLTCIIFLVDQFV). Residues 361–386 (ETNLDNPYNPAVGVFSCWIFTNGWSA) lie on the Extracellular side of the membrane. Residues 387–407 (TFYFYAPLAILIILNCASFFL) form a helical membrane-spanning segment. The Cytoplasmic segment spans residues 408-439 (TTRYIYVENKQNQKVLNNSEPQKLSRNHANYR). A helical transmembrane segment spans residues 440-460 (IYFRLFIIMGGSWFLEIIAFI). At 461 to 469 (CEMENMWKP) the chain is on the extracellular side. The chain crosses the membrane as a helical span at residues 470-490 (LIILNDYINCSQGIIIFVATF). The Cytoplasmic segment spans residues 491 to 532 (CNHEMFRLIRKRIQNRNITSLELTNTSRPVESEKMADVELGK).

It belongs to the G-protein coupled receptor 2 family. Mth subfamily.

Its subcellular location is the cell membrane. This is Probable G-protein coupled receptor Mth-like 11 (mthl11) from Drosophila melanogaster (Fruit fly).